The primary structure comprises 187 residues: Large ribosomal subunit protein uL18 (187 aa).

Belongs to the universal ribosomal protein uL18 family. In terms of assembly, part of the 50S ribosomal subunit. Interacts with proteins L5 and L21e, and attaches the 5S rRNA to the 23S rRNA. Has been cross-linked to L21e.

In terms of biological role, this is one of 5 proteins that mediate the attachment of the 5S rRNA onto the large ribosomal subunit, where it forms part of the central protuberance and stabilizes the orientation of adjacent RNA domains. This Haloarcula marismortui (strain ATCC 43049 / DSM 3752 / JCM 8966 / VKM B-1809) (Halobacterium marismortui) protein is Large ribosomal subunit protein uL18 (rpl18).